Consider the following 320-residue polypeptide: uncharacterized protein (320 aa).

As to quaternary structure, interacts with VP1054, VP39 and VP80.

It is found in the virion. The protein localises to the host nucleus. It localises to the host cytoplasm. Plays a role in nucleocapsid assembly and is essential for viral replication. Distributed over the cylindrical capsid sheath of nucleocapsid. This is an uncharacterized protein from Lepidoptera (butterflies and moths).